The chain runs to 368 residues: uncharacterized protein (368 aa).

5 helical membrane passes run 22-42 (VAGIPLYKIIIASAIMLFTLI), 74-94 (FVKPFSYFIVVFGFYLSLLVL), 104-124 (FLKTFSLLILGWAIIRFLNLF), 144-164 (VGDFILKILKAFVVVIVGASL), and 168-188 (WGVNIGAILASVGLLGLAVSL).

It belongs to the MscS (TC 1.A.23) family.

The protein resides in the cell membrane. This is an uncharacterized protein from Aquifex aeolicus (strain VF5).